The sequence spans 321 residues: Probable arabinan endo-1,5-alpha-L-arabinosidase A (321 aa).

Positions 1–19 are cleaved as a signal peptide; the sequence is MSASAFVAVASCLAALVHG. The Proton acceptor role is filled by D34. E200 acts as the Proton donor in catalysis.

Belongs to the glycosyl hydrolase 43 family.

Its subcellular location is the secreted. The enzyme catalyses Endohydrolysis of (1-&gt;5)-alpha-arabinofuranosidic linkages in (1-&gt;5)-arabinans.. The protein operates within glycan metabolism; L-arabinan degradation. Endo-1,5-alpha-L-arabinanase involved in degradation of pectin. Its preferred substrate is linear 1,5-alpha-L-arabinan. This chain is Probable arabinan endo-1,5-alpha-L-arabinosidase A (abnA), found in Neosartorya fischeri (strain ATCC 1020 / DSM 3700 / CBS 544.65 / FGSC A1164 / JCM 1740 / NRRL 181 / WB 181) (Aspergillus fischerianus).